The chain runs to 883 residues: Integrator complex subunit 6-B (883 aa).

The region spanning 3 to 227 is the VWFA domain; that stretch reads ILLFLLDTSA…QCLESLVQKI (225 aa). The Inhibitory loop signature appears at 626 to 633; that stretch reads MMIDEADE.

This sequence belongs to the Integrator subunit 6 family. As to quaternary structure, component of the Integrator complex, composed of core subunits INTS1, INTS2, INTS3, INTS4, INTS5, INTS6, INTS7, INTS8, INTS9/RC74, INTS10, INTS11/CPSF3L, INTS12, INTS13, INTS14 and INTS15. The core complex associates with protein phosphatase 2A subunits PPP2CA and PPP2R1A, to form the Integrator-PP2A (INTAC) complex.

The protein resides in the nucleus. Its subcellular location is the chromosome. Its function is as follows. Component of the integrator complex, a multiprotein complex that terminates RNA polymerase II (Pol II) transcription in the promoter-proximal region of genes. The integrator complex provides a quality checkpoint during transcription elongation by driving premature transcription termination of transcripts that are unfavorably configured for transcriptional elongation: the complex terminates transcription by (1) catalyzing dephosphorylation of the C-terminal domain (CTD) of Pol II subunit POLR2A/RPB1 and SUPT5H/SPT5, (2) degrading the exiting nascent RNA transcript via endonuclease activity and (3) promoting the release of Pol II from bound DNA. The integrator complex is also involved in terminating the synthesis of non-coding Pol II transcripts, such as enhancer RNAs (eRNAs), small nuclear RNAs (snRNAs), telomerase RNAs and long non-coding RNAs (lncRNAs). Within the integrator complex, INTS6 acts as a molecular adapter that promotes assembly of protein phosphatase 2A (PP2A) subunits to the integrator core complex, promoting recruitment of PP2A to transcription pause-release checkpoint. The chain is Integrator complex subunit 6-B (ints6-b) from Xenopus laevis (African clawed frog).